The primary structure comprises 360 residues: Archaemetzincin-2 (360 aa).

A Zn(2+)-binding site is contributed by His-254. Glu-255 serves as the catalytic Proton acceptor. Residues His-258, His-264, Cys-265, Cys-270, Cys-289, and Cys-292 each coordinate Zn(2+).

Belongs to the peptidase M54 family. Zn(2+) serves as cofactor. Down-regulated in testis from patients with maturation arrest (MA) or Sertoli cell-only syndrome (SCOS).

Its function is as follows. Probable zinc metalloprotease. This is Archaemetzincin-2 (AMZ2) from Homo sapiens (Human).